The primary structure comprises 352 residues: N-acetyl-gamma-glutamyl-phosphate reductase (352 aa).

Residue Cys155 is part of the active site.

Belongs to the NAGSA dehydrogenase family. Type 1 subfamily.

The protein resides in the cytoplasm. It carries out the reaction N-acetyl-L-glutamate 5-semialdehyde + phosphate + NADP(+) = N-acetyl-L-glutamyl 5-phosphate + NADPH + H(+). It participates in amino-acid biosynthesis; L-arginine biosynthesis; N(2)-acetyl-L-ornithine from L-glutamate: step 3/4. Catalyzes the NADPH-dependent reduction of N-acetyl-5-glutamyl phosphate to yield N-acetyl-L-glutamate 5-semialdehyde. This is N-acetyl-gamma-glutamyl-phosphate reductase from Picosynechococcus sp. (strain ATCC 27264 / PCC 7002 / PR-6) (Agmenellum quadruplicatum).